A 240-amino-acid polypeptide reads, in one-letter code: Tetrahydromethanopterin S-methyltransferase subunit A (240 aa).

Over 1 to 218 (MADKREPAPG…KFHSGVHAGK (218 aa)) the chain is Cytoplasmic. 5-hydroxybenzimidazolylcob(I)amide is bound at residue His-85. A helical transmembrane segment spans residues 219–239 (VEGAMIGLTITISLLGLLLLG). Arg-240 is a topological domain (extracellular).

Belongs to the MtrA family. The complex is composed of 8 subunits; MtrA, MtrB, MtrC, MtrD, MtrE, MtrF, MtrG and MtrH. 5-hydroxybenzimidazolylcob(I)amide serves as cofactor.

It localises to the cell membrane. It carries out the reaction 5-methyl-5,6,7,8-tetrahydromethanopterin + coenzyme M + 2 Na(+)(in) = 5,6,7,8-tetrahydromethanopterin + methyl-coenzyme M + 2 Na(+)(out). It functions in the pathway one-carbon metabolism; methanogenesis from CO(2); methyl-coenzyme M from 5,10-methylene-5,6,7,8-tetrahydromethanopterin: step 2/2. Part of a complex that catalyzes the formation of methyl-coenzyme M and tetrahydromethanopterin from coenzyme M and methyl-tetrahydromethanopterin. This is an energy-conserving, sodium-ion translocating step. The polypeptide is Tetrahydromethanopterin S-methyltransferase subunit A (Methanosarcina mazei (strain ATCC BAA-159 / DSM 3647 / Goe1 / Go1 / JCM 11833 / OCM 88) (Methanosarcina frisia)).